The following is a 357-amino-acid chain: Serine/threonine-protein kinase nekl-2 (357 aa).

The Protein kinase domain maps to 4–267 (YEKVRVVGRG…VSQLLSDPLV (264 aa)). Residues 10-18 (VGRGAFGVC) and K35 each bind ATP. The active-site Proton acceptor is the D137. A compositionally biased stretch (basic and acidic residues) spans 281 to 290 (IEPPPTDKRK). The tract at residues 281-357 (IEPPPTDKRK…QSRSQVHSKY (77 aa)) is disordered. 2 stretches are compositionally biased toward polar residues: residues 293–327 (ASLS…QLTP) and 336–357 (FFSS…HSKY).

It belongs to the protein kinase superfamily. NEK Ser/Thr protein kinase family. NIMA subfamily. Mg(2+) is required as a cofactor. As to expression, expressed in hypodermal cells including in hyp7 syncytium but not in seam cells.

It localises to the cytoplasm. The catalysed reaction is L-seryl-[protein] + ATP = O-phospho-L-seryl-[protein] + ADP + H(+). The enzyme catalyses L-threonyl-[protein] + ATP = O-phospho-L-threonyl-[protein] + ADP + H(+). In terms of biological role, probable serine/threonine-protein kinase required for the completion of molting. May play a role in endocytosis in the hypodermis syncytium. The polypeptide is Serine/threonine-protein kinase nekl-2 (Caenorhabditis elegans).